The primary structure comprises 207 residues: Large ribosomal subunit protein uL4 (207 aa).

It belongs to the universal ribosomal protein uL4 family. As to quaternary structure, part of the 50S ribosomal subunit.

Functionally, one of the primary rRNA binding proteins, this protein initially binds near the 5'-end of the 23S rRNA. It is important during the early stages of 50S assembly. It makes multiple contacts with different domains of the 23S rRNA in the assembled 50S subunit and ribosome. In terms of biological role, forms part of the polypeptide exit tunnel. In Rickettsia rickettsii (strain Iowa), this protein is Large ribosomal subunit protein uL4.